A 677-amino-acid polypeptide reads, in one-letter code: DNA-directed RNA polymerase subunit beta' (677 aa).

Cys69, Cys71, Cys87, and Cys90 together coordinate Zn(2+). 3 residues coordinate Mg(2+): Asp489, Asp491, and Asp493.

It belongs to the RNA polymerase beta' chain family. RpoC1 subfamily. In terms of assembly, in plastids the minimal PEP RNA polymerase catalytic core is composed of four subunits: alpha, beta, beta', and beta''. When a (nuclear-encoded) sigma factor is associated with the core the holoenzyme is formed, which can initiate transcription. Mg(2+) is required as a cofactor. The cofactor is Zn(2+).

Its subcellular location is the plastid. The protein resides in the chloroplast. The catalysed reaction is RNA(n) + a ribonucleoside 5'-triphosphate = RNA(n+1) + diphosphate. In terms of biological role, DNA-dependent RNA polymerase catalyzes the transcription of DNA into RNA using the four ribonucleoside triphosphates as substrates. The protein is DNA-directed RNA polymerase subunit beta' of Daucus carota (Wild carrot).